Consider the following 75-residue polypeptide: Putative membrane protein insertion efficiency factor 2 (75 aa).

The protein belongs to the UPF0161 family.

The protein resides in the cell membrane. Functionally, could be involved in insertion of integral membrane proteins into the membrane. This is Putative membrane protein insertion efficiency factor 2 from Bacillus licheniformis (strain ATCC 14580 / DSM 13 / JCM 2505 / CCUG 7422 / NBRC 12200 / NCIMB 9375 / NCTC 10341 / NRRL NRS-1264 / Gibson 46).